A 674-amino-acid chain; its full sequence is E3 ubiquitin ligase Rnf157 (674 aa).

The RING-type zinc-finger motif lies at 277–316; sequence CVVCLSDVRDTLILPCRHLCLCNACADTLRYQASNCPICR. Disordered regions lie at residues 376-404 and 433-610; these read LTPS…GSDI and QNSS…TGRE. Positions 469-508 are enriched in polar residues; the sequence is TPESENLTLSSSGAIDQSSCTGTPLSPTISSPEDPLSSSL. Residues 509–526 show a composition bias toward low complexity; sequence AQSIMSMASSHSQQSQLS. A compositionally biased stretch (polar residues) spans 527–537; it reads TDTVSSMSGSY. Residues 583-604 show a composition bias toward acidic residues; that stretch reads EEMDAEGNVTEEEFASPEEDDG.

The protein resides in the cytoplasm. It carries out the reaction S-ubiquitinyl-[E2 ubiquitin-conjugating enzyme]-L-cysteine + [acceptor protein]-L-lysine = [E2 ubiquitin-conjugating enzyme]-L-cysteine + N(6)-ubiquitinyl-[acceptor protein]-L-lysine.. Its function is as follows. E3 ubiquitin ligase that ubiquitinates apbb1 for its degradation by the proteasome and thus prevents apoptosis and promotes survival of neurons. Has a dual role in neurons as it is also required for dendrite growth and maintenance for which its ligase activity is not critical. May act as a scaffold molecule to regulate this process. Acts as a downstream effector of the interconnected PI3K and MAPK signaling pathways and thus participates in the regulation of the cell cycle. The sequence is that of E3 ubiquitin ligase Rnf157 (rnf157) from Xenopus laevis (African clawed frog).